Here is a 349-residue protein sequence, read N- to C-terminus: Nicotinate-nucleotide--dimethylbenzimidazole phosphoribosyltransferase (349 aa).

The active-site Proton acceptor is the glutamate 313.

This sequence belongs to the CobT family.

It catalyses the reaction 5,6-dimethylbenzimidazole + nicotinate beta-D-ribonucleotide = alpha-ribazole 5'-phosphate + nicotinate + H(+). Its pathway is nucleoside biosynthesis; alpha-ribazole biosynthesis; alpha-ribazole from 5,6-dimethylbenzimidazole: step 1/2. Functionally, catalyzes the synthesis of alpha-ribazole-5'-phosphate from nicotinate mononucleotide (NAMN) and 5,6-dimethylbenzimidazole (DMB). This Mycobacterium avium (strain 104) protein is Nicotinate-nucleotide--dimethylbenzimidazole phosphoribosyltransferase.